We begin with the raw amino-acid sequence, 250 residues long: Ubiquinone/menaquinone biosynthesis C-methyltransferase UbiE (250 aa).

Residues threonine 74, aspartate 94, 122–123 (DA), and serine 139 contribute to the S-adenosyl-L-methionine site.

It belongs to the class I-like SAM-binding methyltransferase superfamily. MenG/UbiE family.

It carries out the reaction a 2-demethylmenaquinol + S-adenosyl-L-methionine = a menaquinol + S-adenosyl-L-homocysteine + H(+). It catalyses the reaction a 2-methoxy-6-(all-trans-polyprenyl)benzene-1,4-diol + S-adenosyl-L-methionine = a 5-methoxy-2-methyl-3-(all-trans-polyprenyl)benzene-1,4-diol + S-adenosyl-L-homocysteine + H(+). Its pathway is quinol/quinone metabolism; menaquinone biosynthesis; menaquinol from 1,4-dihydroxy-2-naphthoate: step 2/2. The protein operates within cofactor biosynthesis; ubiquinone biosynthesis. Functionally, methyltransferase required for the conversion of demethylmenaquinol (DMKH2) to menaquinol (MKH2) and the conversion of 2-polyprenyl-6-methoxy-1,4-benzoquinol (DDMQH2) to 2-polyprenyl-3-methyl-6-methoxy-1,4-benzoquinol (DMQH2). This is Ubiquinone/menaquinone biosynthesis C-methyltransferase UbiE from Dinoroseobacter shibae (strain DSM 16493 / NCIMB 14021 / DFL 12).